A 259-amino-acid chain; its full sequence is MTPTTPADFVVAIPARYASTRLPGKPLQLIGDRPMIQHVAERALLAGAREVWVATDDARIVAAIEHLPGVHVAMTGTAHLSGTDRLAECARIAGWDDQACVVNLQGDEPFAPAAGIRAVADLLQRSGAQMATLAAPVDNAHDLFDPNVVKLVRTAGGDALYFSRAPIPWHRDSFASQHDSVPAEGQWLRHIGIYAYRAGFLQRFAAMPPGMLERTESLEQLRVMEAGYRIAVAVTPEPFPPGIDTADDLVRAQMRVASA.

It belongs to the KdsB family.

The protein resides in the cytoplasm. The enzyme catalyses 3-deoxy-alpha-D-manno-oct-2-ulosonate + CTP = CMP-3-deoxy-beta-D-manno-octulosonate + diphosphate. Its pathway is nucleotide-sugar biosynthesis; CMP-3-deoxy-D-manno-octulosonate biosynthesis; CMP-3-deoxy-D-manno-octulosonate from 3-deoxy-D-manno-octulosonate and CTP: step 1/1. It participates in bacterial outer membrane biogenesis; lipopolysaccharide biosynthesis. In terms of biological role, activates KDO (a required 8-carbon sugar) for incorporation into bacterial lipopolysaccharide in Gram-negative bacteria. This chain is 3-deoxy-manno-octulosonate cytidylyltransferase, found in Xanthomonas axonopodis pv. citri (strain 306).